Reading from the N-terminus, the 222-residue chain is Lipid A 4'-phosphatase (222 aa).

Residues methionine 1–arginine 3 are Cytoplasmic-facing. A helical transmembrane segment spans residues phenylalanine 4–proline 24. At asparagine 25 to arginine 58 the chain is on the periplasmic side. The helical transmembrane segment at phenylalanine 59–aspartate 79 threads the bilayer. The Cytoplasmic segment spans residues lysine 80–lysine 87. Residues alanine 88 to phenylalanine 108 traverse the membrane as a helical segment. Residues lysine 109 to serine 144 lie on the Periplasmic side of the membrane. The chain crosses the membrane as a helical span at residues phenylalanine 145–threonine 165. The Cytoplasmic segment spans residues arginine 166 to lysine 169. A helical membrane pass occupies residues leucine 170–glutamine 190. At glycine 191–histidine 193 the chain is on the periplasmic side. The helical transmembrane segment at phenylalanine 194–alanine 214 threads the bilayer. At leucine 215 to tyrosine 222 the chain is on the cytoplasmic side.

Belongs to the lipid A LpxF 4'-phosphatase family.

Its subcellular location is the cell inner membrane. It participates in bacterial outer membrane biogenesis; LPS lipid A biosynthesis. In terms of biological role, removes the 4'-phosphate moiety from lipid IV(A) (a tetraacylated precursor of lipid A) and from pentaacylated lipid A, but not from hexaacylated lipid A (as is found in E.coli). Does not dephosphorylate phosphatidic acid, phosphatidylglycerophosphate, or the 1-phosphate group of lipid A and lipid A precursors. Its expression in E.coli confers resistance to the cationic antimicrobial peptide (CAMP) polymyxin B. Plays a critical role in the ability of the bacteria to avoid the host's innate immune system, especially the bactericidal action of CAMPs, although whether it is CAMP-sensitivity or increased sensitivity to the immune system is not clear. This is Lipid A 4'-phosphatase from Francisella tularensis subsp. novicida (strain U112).